An 84-amino-acid chain; its full sequence is Sulfur carrier protein TusA (84 aa).

Cysteine 19 acts as the Cysteine persulfide intermediate in catalysis.

The protein belongs to the sulfur carrier protein TusA family. As to quaternary structure, interacts with IscS.

The protein localises to the cytoplasm. It participates in tRNA modification. Sulfur carrier protein involved in sulfur trafficking in the cell. Part of a sulfur-relay system required for 2-thiolation during synthesis of 2-thiouridine of the modified wobble base 5-methylaminomethyl-2-thiouridine (mnm(5)s(2)U) in tRNA. Interacts with IscS and stimulates its cysteine desulfurase activity. Accepts an activated sulfur from IscS, which is then transferred to TusD, and thus determines the direction of sulfur flow from IscS to 2-thiouridine formation. Also appears to be involved in sulfur transfer for the biosynthesis of molybdopterin. This chain is Sulfur carrier protein TusA, found in Photorhabdus laumondii subsp. laumondii (strain DSM 15139 / CIP 105565 / TT01) (Photorhabdus luminescens subsp. laumondii).